The primary structure comprises 555 residues: Phosphomethylpyrimidine synthase (555 aa).

The tract at residues 78-104 (VRDRWGFDNGSAESTKGELSMSERKPR) is disordered. Substrate-binding positions include Asn191, Met220, Tyr249, His285, 305–307 (SRG), 346–349 (DALR), and Glu385. Residue His389 participates in Zn(2+) binding. Substrate is bound at residue Tyr412. His453 is a binding site for Zn(2+). Residues Cys535, Cys538, and Cys543 each contribute to the [4Fe-4S] cluster site.

It belongs to the ThiC family. The cofactor is [4Fe-4S] cluster.

The catalysed reaction is 5-amino-1-(5-phospho-beta-D-ribosyl)imidazole + S-adenosyl-L-methionine = 4-amino-2-methyl-5-(phosphooxymethyl)pyrimidine + CO + 5'-deoxyadenosine + formate + L-methionine + 3 H(+). It functions in the pathway cofactor biosynthesis; thiamine diphosphate biosynthesis. In terms of biological role, catalyzes the synthesis of the hydroxymethylpyrimidine phosphate (HMP-P) moiety of thiamine from aminoimidazole ribotide (AIR) in a radical S-adenosyl-L-methionine (SAM)-dependent reaction. The protein is Phosphomethylpyrimidine synthase of Chlorobaculum parvum (strain DSM 263 / NCIMB 8327) (Chlorobium vibrioforme subsp. thiosulfatophilum).